The primary structure comprises 387 residues: Methionine aminopeptidase 1 (387 aa).

S2 is modified (N-acetylserine). The propeptide occupies 2 to 10; that stretch reads STATTTVTT. Residues 19–73 form a C6H2-type zinc finger; that stretch reads KIYCSGLQCGRETSSQMKCPVCLKQGIVSIFCDTSCYENNYKAHKALHNAKDGLE. C22, C27, C37, C40, C50, C54, H62, and H66 together coordinate Zn(2+). H202 contacts a protein. 3 residues coordinate Zn(2+): D219, D230, and H294. H301 serves as a coordination point for a protein. Positions 327 and 358 each coordinate Zn(2+).

This sequence belongs to the peptidase M24A family. Methionine aminopeptidase type 1 subfamily. As to quaternary structure, associates with the 60S ribosomal subunit of the 80S translational complex. Requires Zn(2+) as cofactor. Co(2+) serves as cofactor. Mn(2+) is required as a cofactor. The cofactor is Fe(2+).

Its subcellular location is the cytoplasm. It carries out the reaction Release of N-terminal amino acids, preferentially methionine, from peptides and arylamides.. In contract to the MetAP 2 isoform, is not inhibited by the fungal metabolite fumagillin, an antiangiogenic drug. Its function is as follows. Cotranslationally removes the N-terminal methionine from nascent proteins. The N-terminal methionine is often cleaved when the second residue in the primary sequence is small and uncharged (Met-Ala-, Cys, Gly, Pro, Ser, Thr, or Val). Plays the major role in N-terminal methionine removal. Less efficient when the second residue is Val. The protein is Methionine aminopeptidase 1 (MAP1) of Saccharomyces cerevisiae (strain ATCC 204508 / S288c) (Baker's yeast).